A 311-amino-acid polypeptide reads, in one-letter code: tRNA dimethylallyltransferase (311 aa).

Residue 19-26 (GPSGSGKS) coordinates ATP. 21–26 (SGSGKS) contacts substrate. Residues 44–47 (DSLS) are interaction with substrate tRNA.

The protein belongs to the IPP transferase family. Monomer. It depends on Mg(2+) as a cofactor.

The catalysed reaction is adenosine(37) in tRNA + dimethylallyl diphosphate = N(6)-dimethylallyladenosine(37) in tRNA + diphosphate. Its function is as follows. Catalyzes the transfer of a dimethylallyl group onto the adenine at position 37 in tRNAs that read codons beginning with uridine, leading to the formation of N6-(dimethylallyl)adenosine (i(6)A). The protein is tRNA dimethylallyltransferase of Helicobacter pylori (strain ATCC 700392 / 26695) (Campylobacter pylori).